Reading from the N-terminus, the 428-residue chain is Enolase (428 aa).

(2R)-2-phosphoglycerate is bound at residue Q163. Residue E205 is the Proton donor of the active site. Positions 242, 285, and 312 each coordinate Mg(2+). 4 residues coordinate (2R)-2-phosphoglycerate: K337, R366, S367, and K388. K337 (proton acceptor) is an active-site residue.

This sequence belongs to the enolase family. Mg(2+) is required as a cofactor.

The protein localises to the cytoplasm. It localises to the secreted. Its subcellular location is the cell surface. It carries out the reaction (2R)-2-phosphoglycerate = phosphoenolpyruvate + H2O. It functions in the pathway carbohydrate degradation; glycolysis; pyruvate from D-glyceraldehyde 3-phosphate: step 4/5. In terms of biological role, catalyzes the reversible conversion of 2-phosphoglycerate (2-PG) into phosphoenolpyruvate (PEP). It is essential for the degradation of carbohydrates via glycolysis. This chain is Enolase, found in Moorella thermoacetica (strain ATCC 39073 / JCM 9320).